The following is a 266-amino-acid chain: Probable carboxylesterase Os04g0669500 (266 aa).

Catalysis depends on charge relay system residues serine 154, aspartate 208, and histidine 240.

The protein belongs to the AB hydrolase superfamily. AB hydrolase 2 family.

Possesses carboxylesterase activity in vitro. The polypeptide is Probable carboxylesterase Os04g0669500 (Oryza sativa subsp. japonica (Rice)).